Reading from the N-terminus, the 360-residue chain is Photosystem II protein D1 (360 aa).

A run of 3 helical transmembrane segments spans residues 30–47 (YVGW…AAAA), 119–134 (HFLI…QWEL), and 143–157 (WICV…AAFA). H119 contacts chlorophyll a. Y127 serves as a coordination point for pheophytin a. 2 residues coordinate [CaMn4O5] cluster: D171 and E190. A helical transmembrane segment spans residues 198–219 (FHMAGVAGMFGGSLFSAMHGSL). Residue H199 coordinates chlorophyll a. A quinone is bound by residues H216 and 265–266 (SF). A Fe cation-binding site is contributed by H216. H273 lines the Fe cation pocket. A helical membrane pass occupies residues 275–289 (FLAVFPVVCVWLTSM). Residues H333, E334, D343, and A345 each contribute to the [CaMn4O5] cluster site. Positions 346 to 360 (AAESTTVALTAPAIG) are excised as a propeptide.

Belongs to the reaction center PufL/M/PsbA/D family. PSII is composed of 1 copy each of membrane proteins PsbA, PsbB, PsbC, PsbD, PsbE, PsbF, PsbH, PsbI, PsbJ, PsbK, PsbL, PsbM, PsbT, PsbX, PsbY, Psb30/Ycf12, peripheral proteins PsbO, CyanoQ (PsbQ), PsbU, PsbV and a large number of cofactors. It forms dimeric complexes. The D1/D2 heterodimer binds P680, chlorophylls that are the primary electron donor of PSII, and subsequent electron acceptors. It shares a non-heme iron and each subunit binds pheophytin, quinone, additional chlorophylls, carotenoids and lipids. D1 provides most of the ligands for the Mn4-Ca-O5 cluster of the oxygen-evolving complex (OEC). There is also a Cl(-1) ion associated with D1 and D2, which is required for oxygen evolution. The PSII complex binds additional chlorophylls, carotenoids and specific lipids. is required as a cofactor. Post-translationally, tyr-162 forms a radical intermediate that is referred to as redox-active TyrZ, YZ or Y-Z. C-terminally processed by CtpA; processing is essential to allow assembly of the oxygen-evolving complex and thus photosynthetic growth.

The protein localises to the cellular thylakoid membrane. It catalyses the reaction 2 a plastoquinone + 4 hnu + 2 H2O = 2 a plastoquinol + O2. Functionally, photosystem II (PSII) is a light-driven water:plastoquinone oxidoreductase that uses light energy to abstract electrons from H(2)O, generating O(2) and a proton gradient subsequently used for ATP formation. It consists of a core antenna complex that captures photons, and an electron transfer chain that converts photonic excitation into a charge separation. The D1/D2 (PsbA/PsbD) reaction center heterodimer binds P680, the primary electron donor of PSII as well as several subsequent electron acceptors. In Prochlorococcus marinus (strain MIT 9515), this protein is Photosystem II protein D1.